The sequence spans 402 residues: Major outer membrane porin (402 aa).

Residues 1–22 (MKKLLKSALLFAATGSALSLQA) form the signal peptide.

It belongs to the chlamydial porin (CP) (TC 1.B.2) family. Part of a disulfide cross-linked outer membrane complex (COMC) composed of the major outer membrane porin (MOMP), the small cysteine-rich protein (OmcA) and the large cysteine-rich periplasmic protein (OmcB).

It localises to the cell outer membrane. In elementary bodies (EBs, the infectious stage, which is able to survive outside the host cell) provides the structural integrity of the outer envelope through disulfide cross-links with the small cysteine-rich protein and the large cysteine-rich periplasmic protein. It has been described in publications as the Sarkosyl-insoluble COMC (Chlamydia outer membrane complex), and serves as the functional equivalent of peptidoglycan. It is present but some of the disulfide bonds are reduced in reticulate bodies (RBs). Its function is as follows. Permits diffusion of specific solutes through the outer membrane. This is Major outer membrane porin (ompA) from Chlamydophila psittaci (strain ATCC VR-125 / 6BC) (Chlamydia psittaci).